The chain runs to 152 residues: Protein SprT-like (152 aa).

The SprT-like domain occupies 9–149; that stretch reads LQKLTETISL…CGKCNGKLKE (141 aa). Residue His-70 participates in Zn(2+) binding. Glu-71 is a catalytic residue. Position 74 (His-74) interacts with Zn(2+).

The protein belongs to the SprT family. Zn(2+) is required as a cofactor.

The protein localises to the cytoplasm. This Staphylococcus saprophyticus subsp. saprophyticus (strain ATCC 15305 / DSM 20229 / NCIMB 8711 / NCTC 7292 / S-41) protein is Protein SprT-like.